Consider the following 388-residue polypeptide: MKHSVLAGLFATGALAQGGAWQQCGGVGFSGSTSCVSGYTCVYLNDWYSQCQPQPTTLRTTTTPGATSTTRSAPAATSTTPAKGKFKWFGINQSCAEFGKGEYPGLWGKHFTFPSTSSIQTHINDGFNMFRVAFSMERLAPNQLNAAFDANYLRNLTETVNFITGKGKYAMLDPHNFGRYYERIITDKAAFASFFTKLATHFASNPLVVFDTNNEYHDMDQQLVFDLNQAAIDAIRAAGATSQYIMVEGNSWTGAWTWNVTNNNLAALRDPENKLVYQMHQYLDSDGSGTSTACVSTQVGLQRVIGATNWLRQNGKVGLLGEFAGGANSVCQQAIEGMLTHLQENSDVWTGALWWAGGPWWGDYIYSFEPPSGIGYTYYNSLLKKYVP.

Residues 1–16 (MKHSVLAGLFATGALA) form the signal peptide. Residues 17–52 (QGGAWQQCGGVGFSGSTSCVSGYTCVYLNDWYSQCQ) enclose the CBM1 domain. Disulfide bonds link cysteine 24–cysteine 41 and cysteine 35–cysteine 51. Residues 53 to 91 (PQPTTLRTTTTPGATSTTRSAPAATSTTPAKGKFKWFGI) are linker. Residues 56–81 (TTLRTTTTPGATSTTRSAPAATSTTP) are disordered. Residues asparagine 92 and asparagine 155 are each glycosylated (N-linked (GlcNAc...) asparagine). Positions 92-388 (NQSCAEFGKG…YNSLLKKYVP (297 aa)) are catalytic. The Proton donor role is filled by glutamate 215. N-linked (GlcNAc...) asparagine glycosylation is present at asparagine 259. Catalysis depends on glutamate 322, which acts as the Nucleophile.

It belongs to the glycosyl hydrolase 5 (cellulase A) family.

It carries out the reaction Endohydrolysis of (1-&gt;4)-beta-D-glucosidic linkages in cellulose, lichenin and cereal beta-D-glucans.. The polypeptide is Endoglucanase 3 (CMC3) (Humicola insolens (Soft-rot fungus)).